Reading from the N-terminus, the 394-residue chain is Actin-related protein 2-A (394 aa).

ATP is bound by residues 160–162, 214–218, and 305–310; these read GDG, RMIKE, and GGSTMY.

It belongs to the actin family. ARP2 subfamily. As to quaternary structure, component of the Arp2/3 complex composed of actr2/arp2, actr3/arp3, arpc1 (arpc1a or arpc1b), arpc2, arpc3, arpc4 and arpc5.

Its subcellular location is the cytoplasm. It localises to the cytoskeleton. The protein resides in the cell projection. The protein localises to the nucleus. In terms of biological role, ATP-binding component of the Arp2/3 complex, a multiprotein complex that mediates actin polymerization upon stimulation by nucleation-promoting factor (NPF). The Arp2/3 complex mediates the formation of branched actin networks in the cytoplasm, providing the force for cell motility. Seems to contact the pointed end of the daughter actin filament. In addition to its role in the cytoplasmic cytoskeleton, the Arp2/3 complex also promotes actin polymerization in the nucleus, thereby regulating gene transcription and repair of damaged DNA. The Arp2/3 complex promotes homologous recombination (HR) repair in response to DNA damage by promoting nuclear actin polymerization, leading to drive motility of double-strand breaks (DSBs). This chain is Actin-related protein 2-A (actr2-a), found in Xenopus laevis (African clawed frog).